Reading from the N-terminus, the 292-residue chain is Protein/nucleic acid deglycase HchA (292 aa).

Residues 1 to 12 (MSQDVNELSKQP) show a composition bias toward polar residues. The disordered stretch occupies residues 1-23 (MSQDVNELSKQPTPDKAEDNAFF). Cys-190 acts as the Nucleophile in catalysis.

Belongs to the peptidase C56 family. HchA subfamily.

It is found in the cytoplasm. The catalysed reaction is N(omega)-(1-hydroxy-2-oxopropyl)-L-arginyl-[protein] + H2O = lactate + L-arginyl-[protein] + H(+). It catalyses the reaction N(6)-(1-hydroxy-2-oxopropyl)-L-lysyl-[protein] + H2O = lactate + L-lysyl-[protein] + H(+). It carries out the reaction S-(1-hydroxy-2-oxopropyl)-L-cysteinyl-[protein] + H2O = lactate + L-cysteinyl-[protein] + H(+). The enzyme catalyses N(omega)-(1-hydroxy-2-oxoethyl)-L-arginyl-[protein] + H2O = L-arginyl-[protein] + glycolate + H(+). The catalysed reaction is N(6)-(1-hydroxy-2-oxoethyl)-L-lysyl-[protein] + H2O = glycolate + L-lysyl-[protein] + H(+). It catalyses the reaction S-(1-hydroxy-2-oxoethyl)-L-cysteinyl-[protein] + H2O = glycolate + L-cysteinyl-[protein] + H(+). It carries out the reaction N(2)-(1-hydroxy-2-oxopropyl)-dGTP + H2O = lactate + dGTP + H(+). The enzyme catalyses N(2)-(1-hydroxy-2-oxopropyl)-GTP + H2O = lactate + GTP + H(+). The catalysed reaction is N(2)-(1-hydroxy-2-oxopropyl)-GDP + H2O = lactate + GDP + H(+). It catalyses the reaction N(2)-(1-hydroxy-2-oxopropyl)-GMP + H2O = lactate + GMP + H(+). It carries out the reaction N(2)-(1-hydroxy-2-oxoethyl)-dGTP + H2O = dGTP + glycolate + H(+). The enzyme catalyses N(2)-(1-hydroxy-2-oxoethyl)-GTP + H2O = glycolate + GTP + H(+). The catalysed reaction is N(2)-(1-hydroxy-2-oxoethyl)-GDP + H2O = glycolate + GDP + H(+). It catalyses the reaction N(2)-(1-hydroxy-2-oxoethyl)-GMP + H2O = glycolate + GMP + H(+). It carries out the reaction an N(2)-(1-hydroxy-2-oxopropyl)-guanosine in RNA + H2O = a guanosine in RNA + lactate + H(+). The enzyme catalyses an N(2)-(1-hydroxy-2-oxopropyl)-2'-deoxyguanosine in DNA + H2O = a 2'-deoxyguanosine in DNA + lactate + H(+). The catalysed reaction is an N(2)-(1-hydroxy-2-oxoethyl)-guanosine in RNA + H2O = a guanosine in RNA + glycolate + H(+). It catalyses the reaction an N(2)-(1-hydroxy-2-oxoethyl)-2'-deoxyguanosine in DNA + H2O = a 2'-deoxyguanosine in DNA + glycolate + H(+). Protein and nucleotide deglycase that catalyzes the deglycation of the Maillard adducts formed between amino groups of proteins or nucleotides and reactive carbonyl groups of glyoxals. Thus, functions as a protein deglycase that repairs methylglyoxal- and glyoxal-glycated proteins, and releases repaired proteins and lactate or glycolate, respectively. Deglycates cysteine, arginine and lysine residues in proteins, and thus reactivates these proteins by reversing glycation by glyoxals. Acts on early glycation intermediates (hemithioacetals and aminocarbinols), preventing the formation of Schiff bases and advanced glycation endproducts (AGE). Also functions as a nucleotide deglycase able to repair glycated guanine in the free nucleotide pool (GTP, GDP, GMP, dGTP) and in DNA and RNA. Is thus involved in a major nucleotide repair system named guanine glycation repair (GG repair), dedicated to reversing methylglyoxal and glyoxal damage via nucleotide sanitization and direct nucleic acid repair. Plays an important role in protecting cells from carbonyl stress. The polypeptide is Protein/nucleic acid deglycase HchA (Staphylococcus aureus (strain Newman)).